The chain runs to 420 residues: Senescence-associated protein SPA15, chloroplastic (420 aa).

A chloroplast-targeting transit peptide spans 1-68 (MAKPNGIIYS…YIATRGSSLR (68 aa)). The segment at 85–111 (EYRDSSDTSSMQGKDKDPASLGKSGTP) is disordered.

Belongs to the ATA15/OSA15 family. In terms of tissue distribution, expressed in leaves.

It localises to the plastid. The protein resides in the chloroplast. Functionally, may be involved in the regulation of leaf senescence. The sequence is that of Senescence-associated protein SPA15, chloroplastic from Ipomoea batatas (Sweet potato).